The following is a 303-amino-acid chain: ATP phosphoribosyltransferase (303 aa).

The protein belongs to the ATP phosphoribosyltransferase family. Long subfamily. It depends on Mg(2+) as a cofactor.

Its subcellular location is the cytoplasm. It catalyses the reaction 1-(5-phospho-beta-D-ribosyl)-ATP + diphosphate = 5-phospho-alpha-D-ribose 1-diphosphate + ATP. The protein operates within amino-acid biosynthesis; L-histidine biosynthesis; L-histidine from 5-phospho-alpha-D-ribose 1-diphosphate: step 1/9. Feedback inhibited by histidine. Functionally, catalyzes the condensation of ATP and 5-phosphoribose 1-diphosphate to form N'-(5'-phosphoribosyl)-ATP (PR-ATP). Has a crucial role in the pathway because the rate of histidine biosynthesis seems to be controlled primarily by regulation of HisG enzymatic activity. The polypeptide is ATP phosphoribosyltransferase (Stenotrophomonas maltophilia (strain R551-3)).